The primary structure comprises 228 residues: UPF0758 protein STER_1430 (228 aa).

The MPN domain occupies 103–225; sequence QIMSSQQVAR…YYSFREERED (123 aa). Zn(2+) is bound by residues His-174, His-176, and Asp-187. Residues 174–187 carry the JAMM motif motif; it reads HNHPSGEAYPSRND.

The protein belongs to the UPF0758 family.

This chain is UPF0758 protein STER_1430, found in Streptococcus thermophilus (strain ATCC BAA-491 / LMD-9).